Reading from the N-terminus, the 282-residue chain is Pantothenate synthetase (282 aa).

30–37 (MGFLHDGH) serves as a coordination point for ATP. His37 serves as the catalytic Proton donor. Gln60 is a (R)-pantoate binding site. Position 60 (Gln60) interacts with beta-alanine. 146-149 (GQKD) is a binding site for ATP. Gln152 serves as a coordination point for (R)-pantoate. ATP is bound by residues Ile175 and 183 to 186 (KSSR).

The protein belongs to the pantothenate synthetase family. As to quaternary structure, homodimer.

It localises to the cytoplasm. It carries out the reaction (R)-pantoate + beta-alanine + ATP = (R)-pantothenate + AMP + diphosphate + H(+). It functions in the pathway cofactor biosynthesis; (R)-pantothenate biosynthesis; (R)-pantothenate from (R)-pantoate and beta-alanine: step 1/1. Catalyzes the condensation of pantoate with beta-alanine in an ATP-dependent reaction via a pantoyl-adenylate intermediate. The polypeptide is Pantothenate synthetase (Campylobacter jejuni subsp. doylei (strain ATCC BAA-1458 / RM4099 / 269.97)).